The primary structure comprises 410 residues: Serine proteinase inhibitor A3K (410 aa).

Residues 1-24 (MPSAISRGLLLLAGLCYLVFGIMA) form the signal peptide. 5 N-linked (GlcNAc...) asparagine glycosylation sites follow: Asn-62, Asn-99, Asn-162, Asn-229, and Asn-263. The interval 360-381 (GTEAAAATVLEATRTARPPRLS) is RCL.

It belongs to the serpin family.

It localises to the secreted. The protein resides in the extracellular space. Functionally, contrapsin inhibits trypsin-like proteases. The protein is Serine proteinase inhibitor A3K (SERPINA3K) of Cavia porcellus (Guinea pig).